The following is a 418-amino-acid chain: Voltage-gated ClC-type chloride channel ClcB (418 aa).

Transmembrane regions (helical) follow at residues leucine 5–alanine 25, leucine 54–phenylalanine 74, leucine 146–glycine 166, leucine 168–isoleucine 188, alanine 222–methionine 242, tryptophan 258–tryptophan 278, alanine 291–alanine 311, glycine 316–tyrosine 336, leucine 352–methionine 372, and methionine 380–isoleucine 400.

This sequence belongs to the chloride channel (TC 2.A.49) family. ClcB subfamily.

The protein resides in the cell inner membrane. In terms of biological role, probably acts as an electrical shunt for an outwardly-directed proton pump that is linked to amino acid decarboxylation, as part of the extreme acid resistance (XAR) response. The protein is Voltage-gated ClC-type chloride channel ClcB of Escherichia coli (strain ATCC 8739 / DSM 1576 / NBRC 3972 / NCIMB 8545 / WDCM 00012 / Crooks).